Reading from the N-terminus, the 20-residue chain is 35 kDa cell wall protein (20 aa).

The protein resides in the secreted. Its subcellular location is the cell wall. In Phaseolus vulgaris (Kidney bean), this protein is 35 kDa cell wall protein.